The following is a 157-amino-acid chain: 1,4-dihydroxy-2-naphthoyl-CoA thioesterase 2 (157 aa).

Residue glutamate 56 is part of the active site. A Microbody targeting signal motif is present at residues 154 to 156; sequence ISK.

This sequence belongs to the 4-hydroxybenzoyl-CoA thioesterase family. DHNA-CoA hydrolase subfamily. As to quaternary structure, homotetramers.

It is found in the peroxisome. It functions in the pathway cofactor biosynthesis; phylloquinone biosynthesis. It participates in quinol/quinone metabolism; 1,4-dihydroxy-2-naphthoate biosynthesis; 1,4-dihydroxy-2-naphthoate from chorismate: step 7/7. Catalyzes the hydrolysis of the thioester bond of 1,4-dihydroxy-2-naphthoyl-CoA (DHNA-CoA) in peroxisomes, a necessary step to form the naphthoquinone ring of phylloquinone (vitamin K(1)). Displayed also slight thioesterase activity towards benzoyl-CoA. Is not active on phenylacetyl-CoA, succinyl-CoA and palmitoyl-CoA thioesters. The chain is 1,4-dihydroxy-2-naphthoyl-CoA thioesterase 2 from Arabidopsis thaliana (Mouse-ear cress).